The primary structure comprises 126 residues: Aspartate 1-decarboxylase (126 aa).

Catalysis depends on Ser25, which acts as the Schiff-base intermediate with substrate; via pyruvic acid. Ser25 carries the post-translational modification Pyruvic acid (Ser). Thr57 is a binding site for substrate. The active-site Proton donor is the Tyr58. 73 to 75 (GAA) serves as a coordination point for substrate.

Belongs to the PanD family. As to quaternary structure, heterooctamer of four alpha and four beta subunits. Pyruvate is required as a cofactor. In terms of processing, is synthesized initially as an inactive proenzyme, which is activated by self-cleavage at a specific serine bond to produce a beta-subunit with a hydroxyl group at its C-terminus and an alpha-subunit with a pyruvoyl group at its N-terminus.

It localises to the cytoplasm. It carries out the reaction L-aspartate + H(+) = beta-alanine + CO2. Its pathway is cofactor biosynthesis; (R)-pantothenate biosynthesis; beta-alanine from L-aspartate: step 1/1. Its function is as follows. Catalyzes the pyruvoyl-dependent decarboxylation of aspartate to produce beta-alanine. In Tolumonas auensis (strain DSM 9187 / NBRC 110442 / TA 4), this protein is Aspartate 1-decarboxylase.